Reading from the N-terminus, the 86-residue chain is RNA-binding protein Hfq (86 aa).

A Sm domain is found at 9 to 68 (DPYLNVLRKERIPVSIYLVNGIKLQGQVESFDQFVVLLKNTVSQMVYKHAISTVVPSRPV).

Belongs to the Hfq family. As to quaternary structure, homohexamer.

RNA chaperone that binds small regulatory RNA (sRNAs) and mRNAs to facilitate mRNA translational regulation in response to envelope stress, environmental stress and changes in metabolite concentrations. Also binds with high specificity to tRNAs. The protein is RNA-binding protein Hfq of Saccharophagus degradans (strain 2-40 / ATCC 43961 / DSM 17024).